A 440-amino-acid chain; its full sequence is Inner membrane metabolite transport protein YhjE (440 aa).

Residues 1–34 (MQATATTLDHEQEYTPINSRNKVLVASLIGTAIE) lie on the Cytoplasmic side of the membrane. A helical transmembrane segment spans residues 35–55 (FFDFYIYATAAVIVFPHIFFP). Residues 56–66 (QGDPTAATLQS) are Periplasmic-facing. A helical membrane pass occupies residues 67–87 (LATFAIAFVARPIGSAVFGHF). The Cytoplasmic portion of the chain corresponds to 88–108 (GDRVGRKATLVASLLTMGIST). 2 helical membrane-spanning segments follow: residues 109-129 (VVIG…LLLA) and 130-150 (LARF…ALLA). At 151-167 (TENAPPRKRALYGSFPQ) the chain is on the cytoplasmic side. The helical transmembrane segment at 168–188 (LGAPIGFFFANGTFLLLSWLL) threads the bilayer. Residues 189-192 (TDEQ) lie on the Periplasmic side of the membrane. Residues 193–213 (FMSWGWRVPFIFSAVLVIIGL) form a helical membrane-spanning segment. At 214 to 248 (YVRVSLHESPVFEKVAKAKKQVKIPLGTLLTKHVR) the chain is on the cytoplasmic side. A helical transmembrane segment spans residues 249–269 (VTVLGTFIMLATYTLFYIMTV). Over 270–289 (YSMTFSTAAAPVGLGLPRNE) the chain is Periplasmic. Residues 290–310 (VLWMLMMAVIGFGVMVPVAGL) form a helical membrane-spanning segment. The Cytoplasmic segment spans residues 311–320 (LADAFGRRKS). Residues 321-341 (MVIITTLIILFALFAFNPLLG) traverse the membrane as a helical segment. The Periplasmic segment spans residues 342-345 (SGNP). The chain crosses the membrane as a helical span at residues 346 to 366 (ILVFAFLLLGLSLMGLTFGPM). Over 367–384 (GALLPELFPTEVRYTGAS) the chain is Cytoplasmic. A helical membrane pass occupies residues 385–405 (FSYNVASILGASVAPYIAAWL). Residues 406–410 (QTNYG) lie on the Periplasmic side of the membrane. Residues 411–431 (LGAVGLYLAAMAGLTLIALLL) form a helical membrane-spanning segment. At 432 to 440 (THETRHQSL) the chain is on the cytoplasmic side.

Belongs to the major facilitator superfamily. Metabolite:H+ Symporter (MHS) family (TC 2.A.1.6) family.

Its subcellular location is the cell inner membrane. The polypeptide is Inner membrane metabolite transport protein YhjE (yhjE) (Escherichia coli (strain K12)).